The chain runs to 368 residues: Peptide chain release factor 2 (368 aa).

N5-methylglutamine is present on Q250.

This sequence belongs to the prokaryotic/mitochondrial release factor family. Post-translationally, methylated by PrmC. Methylation increases the termination efficiency of RF2.

Its subcellular location is the cytoplasm. Peptide chain release factor 2 directs the termination of translation in response to the peptide chain termination codons UGA and UAA. This is Peptide chain release factor 2 from Chlamydia abortus (strain DSM 27085 / S26/3) (Chlamydophila abortus).